Consider the following 263-residue polypeptide: 4-hydroxy-tetrahydrodipicolinate reductase (263 aa).

NAD(+) is bound at residue 10–15; sequence GASGKM. Residue Arg-38 participates in NADP(+) binding. Residues 97 to 99 and 123 to 126 contribute to the NAD(+) site; these read GTT and APNF. His-153 functions as the Proton donor/acceptor in the catalytic mechanism. His-154 provides a ligand contact to (S)-2,3,4,5-tetrahydrodipicolinate. Residue Lys-157 is the Proton donor of the active site. (S)-2,3,4,5-tetrahydrodipicolinate is bound at residue 163–164; sequence GT.

Belongs to the DapB family.

It localises to the cytoplasm. It catalyses the reaction (S)-2,3,4,5-tetrahydrodipicolinate + NAD(+) + H2O = (2S,4S)-4-hydroxy-2,3,4,5-tetrahydrodipicolinate + NADH + H(+). The catalysed reaction is (S)-2,3,4,5-tetrahydrodipicolinate + NADP(+) + H2O = (2S,4S)-4-hydroxy-2,3,4,5-tetrahydrodipicolinate + NADPH + H(+). Its pathway is amino-acid biosynthesis; L-lysine biosynthesis via DAP pathway; (S)-tetrahydrodipicolinate from L-aspartate: step 4/4. Catalyzes the conversion of 4-hydroxy-tetrahydrodipicolinate (HTPA) to tetrahydrodipicolinate. The chain is 4-hydroxy-tetrahydrodipicolinate reductase from Dehalococcoides mccartyi (strain CBDB1).